Here is a 906-residue protein sequence, read N- to C-terminus: Catenin alpha-2 (906 aa).

The span at 866-880 (KKPLVKREKPEEYQT) shows a compositional bias: basic and acidic residues. Residues 866–892 (KKPLVKREKPEEYQTRVRRGSQKKHIS) form a disordered region. Residues 881 to 891 (RVRRGSQKKHI) are compositionally biased toward basic residues.

The protein belongs to the vinculin/alpha-catenin family. As to quaternary structure, interacts with CDH1 and CDH2. As to expression, mainly in the nervous system (at protein level).

The protein localises to the cell membrane. It is found in the cytoplasm. It localises to the cytoskeleton. The protein resides in the cell junction. Its subcellular location is the adherens junction. The protein localises to the cell projection. It is found in the axon. It localises to the nucleus. Functionally, may function as a linker between cadherin adhesion receptors and the cytoskeleton to regulate cell-cell adhesion and differentiation in the nervous system. The sequence is that of Catenin alpha-2 (CTNNA2) from Gallus gallus (Chicken).